The following is a 456-amino-acid chain: Aminotransferase ALD1, chloroplastic (456 aa).

A chloroplast-targeting transit peptide spans 1–43 (MVSLMFFSSASPLCSSPSKIPKASLDFEMKKLGGSTKLVRNVN). Pyridoxal 5'-phosphate is bound by residues Y108, 142–143 (AQ), N223, D251, Y254, S281, S283, R292, and N323.

Belongs to the class-I pyridoxal-phosphate-dependent aminotransferase family. LL-diaminopimelate aminotransferase subfamily. Pyridoxal 5'-phosphate serves as cofactor. In terms of tissue distribution, highly expressed in senescing leaves, flowers, siliques and seeds.

It is found in the plastid. The protein resides in the chloroplast. Its function is as follows. Aminotransferase involved in local and systemic acquired resistance (SAR) to the bacterial pathogen P.syringae. Required for salicylic acid (SA) and camalexin accumulation upon pathogen infection. Possesses aminotransferase activity in vitro and may generate amino-acid-derived defense signals in vivo. May be involved in ethylene-induced senescence signaling. Involved in the biosynthesis of pipecolate (Pip), a metabolite that orchestrates defense amplification, positive regulation of SA biosynthesis, and priming to guarantee effective local resistance induction and the establishment of SAR. Converts lysine to alpha-keto-epsilon-aminocaproate, which then can spontaneously cyclize to form delta-(1)-piperideine-2-carboxylate (P2C). P2C is converted to Pip by SARD4. May produce non-Pip metabolites that play roles in immunity. Involved in the synthesis of distinct metabolite signals that affect basal and early defenses, and later defense responses. This Arabidopsis thaliana (Mouse-ear cress) protein is Aminotransferase ALD1, chloroplastic.